The following is a 1117-amino-acid chain: MPATQKPMRYGHTEGHTEVCFDDSGSYIVTCGSDGDVRMWEDLDDDDPKSVNVGEKAFSCALKNGKLVTAVSNNTVQVYTFPEGVPDGILTRFTTNANHVVFNGAGNKIAAGSSDFLVKVVDVMDNSQQQTFRGHDAPVLSLSFDPKDIFLASASCDGTVRVWNISDQTCAVSWPVLQKSNDVVNAKSICRLAWQPKAGKLLAVPVEKSVKLYRRETWSNPFDLSDSSISQTLNIVTWSPCGQYLAAGAINGLIVVWNVETKDCMERVKHEKGYAICGLAWHPTCSRICYTDVEGNLGVLENVCDLSGKVSSNKVSSRVEKDYNDLFDGDDTSSAGDFLNDNAVEIPSFSKGIINEDDDNDDIMLAADHDLGDDENSVDVTMLKADLSHKEEGDDDQARSIHNLPLIRPQRPFYDGPMPTPRQKPFQSSSTPLHLSHRFMVWNSVGIIRCYNDDQDSAIDVEFHDTSIHHATHLLNAFNYTMGTLSHEAILLACESADELASKLHCLHFSSWDSSKEWMVDMPQNEDIEAICLGLGWAAAATTALLLRLFTIGGVQKEVFCLPGPVVSMAGHGEQLCIVYHRGTGFDGDQCLGVQLLELGRKKNQVLHGDPLPLTRKSYLTWLGFSAEGTPCYVDSEGCVRMLNRGLGNTWTPVCNIREHCKGKSDHYWVVGIHENPQQLRCIPCKGSRFPPTLPRPAVAILSFKLPYCQTSTEKGQMEEQFWHSVLFHNYLDYLAKNGYDYEESIKNQAVKEQQELLMKMLALSCKLEREFRCVELADLMTQNAVHLAIKYASRSRKLILAQKLSELAAEKAAELAETQSEEEKEEDFREKLNAGYSHTTTEWSRPRVRSQVEDAEDREDTVSEEKPESHNHGQNLFQSANSSDTPALKSGAVFSSSQGWVNPFKVVVSSKEPAVSANSTRSANILDSMNKSSRKSTSLNRMENNEKSPVIKPLTPKPRSKQASAASYFQKRTPQADKTEEVKENPKSSSSDAPAVCLQNSENQRPKTGFQMWLEENRSQILSDNPDISDETDIIKEGMIRFRVLSAEERKAWTNKAKGETASDGAEAKKRKRVVSEICETENQEETVKENLDLSKKQKALNLPANQKLSAFAFKQ.

WD repeat units follow at residues 11 to 50, 52 to 91, 93 to 131, 134 to 173, 184 to 223, 228 to 267, and 271 to 310; these read GHTEGHTEVCFDDSGSYIVTCGSDGDVRMWEDLDDDDPKS, NVGEKAFSCALKNGKLVTAVSNNTVQVYTFPEGVPDGILT, FTTNANHVVFNGAGNKIAAGSSDFLVKVVDVMDNSQQQT, GHDAPVLSLSFDPKDIFLASASCDGTVRVWNISDQTCAVS, VNAKSICRLAWQPKAGKLLAVPVEKSVKLYRRETWSNPFD, SISQTLNIVTWSPCGQYLAAGAINGLIVVWNVETKDCMER, and EKGYAICGLAWHPTCSRICYTDVEGNLGVLENVCDLSGKV. Phosphoserine occurs at positions 333 and 377. K390 is covalently cross-linked (Glycyl lysine isopeptide (Lys-Gly) (interchain with G-Cter in SUMO2)). K664 is modified (N6-acetyllysine). Residues 816-885 form a disordered region; sequence LAETQSEEEK…NLFQSANSSD (70 aa). Position 819 is a phosphothreonine (T819). S821 bears the Phosphoserine mark. Basic and acidic residues predominate over residues 861–872; the sequence is DTVSEEKPESHN. Residues 873-885 are compositionally biased toward polar residues; the sequence is HGQNLFQSANSSD. A phosphoserine mark is found at S910 and S923. The segment at 911–1005 is disordered; it reads SKEPAVSANS…AVCLQNSENQ (95 aa). The span at 917–943 shows a compositional bias: polar residues; the sequence is SANSTRSANILDSMNKSSRKSTSLNRM. K953 bears the N6-acetyllysine mark. Residues 962–974 are compositionally biased toward polar residues; the sequence is KQASAASYFQKRT. The span at 975-987 shows a compositional bias: basic and acidic residues; that stretch reads PQADKTEEVKENP. Polar residues predominate over residues 988 to 1004; the sequence is KSSSSDAPAVCLQNSEN. Positions 1004–1073 form a DNA-binding region, HMG box; sequence NQRPKTGFQM…SDGAEAKKRK (70 aa). S1030 carries the post-translational modification Phosphoserine. The disordered stretch occupies residues 1054-1074; sequence WTNKAKGETASDGAEAKKRKR. A Glycyl lysine isopeptide (Lys-Gly) (interchain with G-Cter in SUMO1); alternate cross-link involves residue K1116. A Glycyl lysine isopeptide (Lys-Gly) (interchain with G-Cter in SUMO2); alternate cross-link involves residue K1116.

In terms of assembly, trimer. Interacts with the polymerase alpha catalytic subunit POLA1. Interacts with MCM10. Interacts with DNA2. Interacts with CDC45 and GINS2 subunit of GINS complex; these interactions associate WDHD1 with the CMG helicase complex.

It is found in the nucleus. Its subcellular location is the nucleoplasm. Functionally, core replisome component that acts as a replication initiation factor. Binds directly to the CMG complex and functions as a hub to recruit additional proteins to the replication fork. In Mus musculus (Mouse), this protein is WD repeat and HMG-box DNA-binding protein 1 (Wdhd1).